The primary structure comprises 118 residues: Holin-like protein CidA 2 (118 aa).

Transmembrane regions (helical) follow at residues 4–26, 33–52, 62–84, and 91–113; these read VTLL…IQGV, GSLI…VLPL, LIVF…GSFL, and IFLL…SQLL.

Belongs to the CidA/LrgA family. CidA subfamily.

It localises to the cell membrane. Increases the activity of extracellular murein hydrolases possibly by mediating their export via hole formation. Inhibited by the antiholin-like proteins LrgAB. In an unstressed cell, the LrgAB products probably inhibit the function of the CidA protein. When a cell is stressed by the addition of antibiotics or by other factors in the environment, CidA possibly oligomerizes within the bacterial cell membrane, creating lesions that disrupt the proton motive force, which in turn results in loss of cell viability. These lesions are also hypothesized to regulate the subsequent cell lysis by either allowing the murein hydrolases access to the cell wall substrate and/or regulating their activity by a possible change in the cell wall pH that results from loss of membrane potential. In Bacillus cereus (strain ATCC 14579 / DSM 31 / CCUG 7414 / JCM 2152 / NBRC 15305 / NCIMB 9373 / NCTC 2599 / NRRL B-3711), this protein is Holin-like protein CidA 2 (cidA2).